The following is a 441-amino-acid chain: MSEMTPREIVHELDSHIIGQQKAKRSVAIALRNRWRRMQLAADLRQEVTPKNILMIGPTGVGKTEIARRLARLAKAPFIKVEATKFTEVGYVGKEVEQIIRDLTDSAIKLTREEQIKKCKFRAEEAAEERILDALLPKPKEDWDSEKSDGSATRQIFRKKLREGQLDDKEIEIDVSAPQAGIEIMSPPGMEEMTNQLQSMFQNMGPGASKRRKMPIKEAYKLLIEEEASKLINQEDLKEQAIELVEQHGIVFLDEIDKICKRGESSGPDVSREGVQRDLLPLVEGCTVNTKHGMVKTDHILFIASGAFQMSKPSDLIPELQGRLPIRVELDALTAGDFKRILTEPHASLTEQYIALMGTEGVTIEFTEDGIDSIAEAAWQVNERTENIGARRLHTVMERLMEELSYEASDKSGSVTVIDAAYVKASLDNLVQDEDLSRYIL.

ATP is bound by residues Ile18, 60–65 (GVGKTE), Asp254, Glu319, and Arg391.

The protein belongs to the ClpX chaperone family. HslU subfamily. In terms of assembly, a double ring-shaped homohexamer of HslV is capped on each side by a ring-shaped HslU homohexamer. The assembly of the HslU/HslV complex is dependent on binding of ATP.

It is found in the cytoplasm. ATPase subunit of a proteasome-like degradation complex; this subunit has chaperone activity. The binding of ATP and its subsequent hydrolysis by HslU are essential for unfolding of protein substrates subsequently hydrolyzed by HslV. HslU recognizes the N-terminal part of its protein substrates and unfolds these before they are guided to HslV for hydrolysis. This chain is ATP-dependent protease ATPase subunit HslU, found in Shewanella pealeana (strain ATCC 700345 / ANG-SQ1).